The sequence spans 859 residues: Protein translocase subunit SecA (859 aa).

ATP is bound by residues Gln88, 106–110 (GEGKT), and Asp496. The tract at residues 818–838 (FSHQPQSEVKVSRNDPCPCGS) is disordered. Cys834, Cys836, Cys845, and Cys846 together coordinate Zn(2+).

It belongs to the SecA family. Monomer and homodimer. Part of the essential Sec protein translocation apparatus which comprises SecA, SecYEG and auxiliary proteins SecDF-YajC and YidC. It depends on Zn(2+) as a cofactor.

Its subcellular location is the cell inner membrane. The protein localises to the cytoplasm. The catalysed reaction is ATP + H2O + cellular proteinSide 1 = ADP + phosphate + cellular proteinSide 2.. Functionally, part of the Sec protein translocase complex. Interacts with the SecYEG preprotein conducting channel. Has a central role in coupling the hydrolysis of ATP to the transfer of proteins into and across the cell membrane, serving as an ATP-driven molecular motor driving the stepwise translocation of polypeptide chains across the membrane. The sequence is that of Protein translocase subunit SecA from Wolinella succinogenes (strain ATCC 29543 / DSM 1740 / CCUG 13145 / JCM 31913 / LMG 7466 / NCTC 11488 / FDC 602W) (Vibrio succinogenes).